Here is a 367-residue protein sequence, read N- to C-terminus: 2-aminoethylphosphonate--pyruvate transaminase (367 aa).

Residue Lys194 is modified to N6-(pyridoxal phosphate)lysine.

The protein belongs to the class-V pyridoxal-phosphate-dependent aminotransferase family. PhnW subfamily. Homodimer. Requires pyridoxal 5'-phosphate as cofactor.

It catalyses the reaction (2-aminoethyl)phosphonate + pyruvate = phosphonoacetaldehyde + L-alanine. Its function is as follows. Involved in phosphonate degradation. The protein is 2-aminoethylphosphonate--pyruvate transaminase of Salmonella schwarzengrund (strain CVM19633).